The primary structure comprises 156 residues: Small ribosomal subunit protein uS7 (156 aa).

It belongs to the universal ribosomal protein uS7 family. As to quaternary structure, part of the 30S ribosomal subunit. Contacts proteins S9 and S11.

Functionally, one of the primary rRNA binding proteins, it binds directly to 16S rRNA where it nucleates assembly of the head domain of the 30S subunit. Is located at the subunit interface close to the decoding center, probably blocks exit of the E-site tRNA. The polypeptide is Small ribosomal subunit protein uS7 (Clavibacter sepedonicus (Clavibacter michiganensis subsp. sepedonicus)).